The chain runs to 1009 residues: Translation initiation factor IF-2 (1009 aa).

Positions 1–415 (MSDENENGRP…EREKEKRRGG (415 aa)) are disordered. A compositionally biased stretch (basic and acidic residues) spans 94-110 (EELRARQRVVDAAREAQ). A compositionally biased stretch (low complexity) spans 111–121 (ARQVAEQAAAE). The segment covering 122–136 (ARARAAQEAAQREAA) has biased composition (basic and acidic residues). Residues 137–146 (AKAAAERAAA) show a composition bias toward low complexity. Positions 147 to 174 (APPPVAQAPAAPAPAAPVTPPPAAPQAP) are enriched in pro residues. Low complexity predominate over residues 175 to 189 (RPVAQAPVAPSAPRQ). 2 stretches are compositionally biased toward basic and acidic residues: residues 208–218 (EPSRDRRDDRP) and 251–287 (PRPEGDRPRGPRPDGDRPQGDRGGYRGDRPQGDRPQG). The span at 311-320 (GGPPRGPRPG) shows a compositional bias: pro residues. Basic and acidic residues-rich tracts occupy residues 346-358 (MDRRPDEDDDRRK) and 403-415 (RAREREKEKRRGG). A tr-type G domain is found at 505–675 (LRPPVVTIMG…LLQAEVLDLK (171 aa)). The tract at residues 514 to 521 (GHVDHGKT) is G1. 514–521 (GHVDHGKT) serves as a coordination point for GTP. The tract at residues 539-543 (GITQH) is G2. Positions 561 to 564 (DTPG) are G3. GTP is bound by residues 561-565 (DTPGH) and 615-618 (NKMD). Residues 615–618 (NKMD) are G4. Residues 651–653 (SAK) form a G5 region.

This sequence belongs to the TRAFAC class translation factor GTPase superfamily. Classic translation factor GTPase family. IF-2 subfamily.

The protein localises to the cytoplasm. In terms of biological role, one of the essential components for the initiation of protein synthesis. Protects formylmethionyl-tRNA from spontaneous hydrolysis and promotes its binding to the 30S ribosomal subunits. Also involved in the hydrolysis of GTP during the formation of the 70S ribosomal complex. The chain is Translation initiation factor IF-2 from Caulobacter vibrioides (strain ATCC 19089 / CIP 103742 / CB 15) (Caulobacter crescentus).